Consider the following 271-residue polypeptide: Putative phosphoenolpyruvate synthase regulatory protein (271 aa).

152–159 (GVSRSGKT) contacts ADP.

The protein belongs to the pyruvate, phosphate/water dikinase regulatory protein family. PSRP subfamily.

The catalysed reaction is [pyruvate, water dikinase] + ADP = [pyruvate, water dikinase]-phosphate + AMP + H(+). It carries out the reaction [pyruvate, water dikinase]-phosphate + phosphate + H(+) = [pyruvate, water dikinase] + diphosphate. Functionally, bifunctional serine/threonine kinase and phosphorylase involved in the regulation of the phosphoenolpyruvate synthase (PEPS) by catalyzing its phosphorylation/dephosphorylation. This is Putative phosphoenolpyruvate synthase regulatory protein from Dichelobacter nodosus (strain VCS1703A).